An 886-amino-acid polypeptide reads, in one-letter code: MTSQLIKKIVTGDEIRNAFLKFYSEKLHKIIPSASLIPDDPTVMLTIAGMLPFKPVFLGLKERPSKRATSSQKCIRTNDIENVGVTARHHTFFEMLGNFSFGDYFKREAIQWAWELVTNIYQLSVENIIVSVFHEDEESAKIWIDEIGIHPDRIVKLGEEDNFWSSGKTGPCGPCSELYYDFHPEKGLQNIDLEDGDRFIEFYNLVFMQYNRDQNGKLTDLKFKNIDTGMGLERMAQILQKKQNNYETDLIFPIIQKICEIANIDYFSSDDKNKISLKIIGDHTRAVIHLISDGVAASNLGRGYILRRLIRRMVRHGRLLGITNEFLPHIASVGINLMQNNYPDLKNNNDLILNEIKIEEIRFRETLERGEKLLDELISSGQKLISGFKAFELYDTYGFPLELTVEIAEENSISVDVKGFEEEMNAQKERAKAASSNIDLTLEGSLEREIDLFNKTVFNGYNSLLSEAEIKGIFLDSTLVKQASEGQKVLIVLDQTTFYGESGGQVGDIGTIFSKDVEVLVDNVMRKKNVFLHHGTIKKGILTIGQKVKTNVSSSNRAKAAANHTATHLLQSALKLIVNESVGQKGSLVAFNKLRFDFNSSNPISKDQISKIETLVNSWIMENHALEIKNMSKSEALEKGAVAMFGEKYDDEVRVVNVPGVSMELCGGTHVKTTSELGSFKIISEEGISAGVRRIEALSGQSALDYFSDRNALVNQLSDLLKANPNQLFERVNNLQSELINKNKEIQKMKDEIAYFKYSSIKSSAEIVNSFSILVNQIDGLDGNSLQSAALNLTSHLGNKAIVILGGIPNPENRKLLFVVSLGDDAVKIGLHAGKLINEIARICSGGGGGKPNFAQAGAKDIDKLSDAIDYAKNYLQKTLDSHSDK.

Histidine 564, histidine 568, cysteine 666, and histidine 670 together coordinate Zn(2+).

Belongs to the class-II aminoacyl-tRNA synthetase family. Requires Zn(2+) as cofactor.

The protein localises to the cytoplasm. The enzyme catalyses tRNA(Ala) + L-alanine + ATP = L-alanyl-tRNA(Ala) + AMP + diphosphate. Functionally, catalyzes the attachment of alanine to tRNA(Ala) in a two-step reaction: alanine is first activated by ATP to form Ala-AMP and then transferred to the acceptor end of tRNA(Ala). Also edits incorrectly charged Ser-tRNA(Ala) and Gly-tRNA(Ala) via its editing domain. In Prochlorococcus marinus (strain MIT 9301), this protein is Alanine--tRNA ligase.